Consider the following 187-residue polypeptide: UPF0301 protein HSM_1900 (187 aa).

This sequence belongs to the UPF0301 (AlgH) family.

In Histophilus somni (strain 2336) (Haemophilus somnus), this protein is UPF0301 protein HSM_1900.